Consider the following 240-residue polypeptide: Cell division protein FtsQ (240 aa).

Residues 1-7 (MTGPGLR) lie on the Cytoplasmic side of the membrane. A helical membrane pass occupies residues 8–28 (LLAGMGLAGALVLGLSLWLHF). The Periplasmic segment spans residues 29–240 (DPDQHLPIGS…EADNDGGNAR (212 aa)). The POTRA domain occupies 34 to 102 (LPIGSIQITG…DTLEVHVTEP (69 aa)).

This sequence belongs to the FtsQ/DivIB family. FtsQ subfamily. In terms of assembly, part of a complex composed of FtsB, FtsL and FtsQ.

The protein resides in the cell inner membrane. Essential cell division protein. May link together the upstream cell division proteins, which are predominantly cytoplasmic, with the downstream cell division proteins, which are predominantly periplasmic. May control correct divisome assembly. In Thioalkalivibrio sp. (strain K90mix), this protein is Cell division protein FtsQ.